The primary structure comprises 354 residues: Dihydroorotate dehydrogenase (quinone) (354 aa).

Residues 61-65 (AGYDK) and A85 each bind FMN. A substrate-binding site is contributed by K65. 110–114 (NRFGF) is a substrate binding site. Residues N139 and N170 each coordinate FMN. N170 is a substrate binding site. S173 functions as the Nucleophile in the catalytic mechanism. N175 contributes to the substrate binding site. Residues K211 and T239 each coordinate FMN. 240–241 (NT) lines the substrate pocket. Residues G261, G290, and 311–312 (YT) each bind FMN.

Belongs to the dihydroorotate dehydrogenase family. Type 2 subfamily. As to quaternary structure, monomer. FMN serves as cofactor.

The protein localises to the cell membrane. It catalyses the reaction (S)-dihydroorotate + a quinone = orotate + a quinol. It functions in the pathway pyrimidine metabolism; UMP biosynthesis via de novo pathway; orotate from (S)-dihydroorotate (quinone route): step 1/1. Its function is as follows. Catalyzes the conversion of dihydroorotate to orotate with quinone as electron acceptor. The chain is Dihydroorotate dehydrogenase (quinone) from Cereibacter sphaeroides (strain KD131 / KCTC 12085) (Rhodobacter sphaeroides).